We begin with the raw amino-acid sequence, 202 residues long: MSALETQALGMIPMVIEQSGRGERSYDIYSRLLKERIVFLIGEVNDQTANLVVAQLLFLESENPDKDISFYINSPGGSVTAGMAIYDTMQFIKPDVSTMCLGFAASMGAFLLAAGAKGKRFSLPNSKIMIHQVLGGARGQATDIEIHARDILRTKDQMNRILAERTGQPLEKVKADTERDYFLTADEAKEYGLVDQVVTQRP.

Ser-106 functions as the Nucleophile in the catalytic mechanism. The active site involves His-131.

Belongs to the peptidase S14 family. As to quaternary structure, fourteen ClpP subunits assemble into 2 heptameric rings which stack back to back to give a disk-like structure with a central cavity, resembling the structure of eukaryotic proteasomes.

The protein localises to the cytoplasm. It carries out the reaction Hydrolysis of proteins to small peptides in the presence of ATP and magnesium. alpha-casein is the usual test substrate. In the absence of ATP, only oligopeptides shorter than five residues are hydrolyzed (such as succinyl-Leu-Tyr-|-NHMec, and Leu-Tyr-Leu-|-Tyr-Trp, in which cleavage of the -Tyr-|-Leu- and -Tyr-|-Trp bonds also occurs).. Its function is as follows. Cleaves peptides in various proteins in a process that requires ATP hydrolysis. Has a chymotrypsin-like activity. Plays a major role in the degradation of misfolded proteins. This is ATP-dependent Clp protease proteolytic subunit from Paracidovorax citrulli (strain AAC00-1) (Acidovorax citrulli).